Reading from the N-terminus, the 132-residue chain is Holo-[acyl-carrier-protein] synthase (132 aa).

Residues Asp8 and Glu62 each coordinate Mg(2+).

This sequence belongs to the P-Pant transferase superfamily. AcpS family. Requires Mg(2+) as cofactor.

The protein resides in the cytoplasm. The enzyme catalyses apo-[ACP] + CoA = holo-[ACP] + adenosine 3',5'-bisphosphate + H(+). In terms of biological role, transfers the 4'-phosphopantetheine moiety from coenzyme A to a Ser of acyl-carrier-protein. This Polaromonas sp. (strain JS666 / ATCC BAA-500) protein is Holo-[acyl-carrier-protein] synthase.